The primary structure comprises 306 residues: tRNA dimethylallyltransferase 1 (306 aa).

13–20 (GPTASGKT) is a binding site for ATP. 15–20 (TASGKT) contacts substrate. The tract at residues 38–41 (DSRQ) is interaction with substrate tRNA.

This sequence belongs to the IPP transferase family. In terms of assembly, monomer. It depends on Mg(2+) as a cofactor.

The catalysed reaction is adenosine(37) in tRNA + dimethylallyl diphosphate = N(6)-dimethylallyladenosine(37) in tRNA + diphosphate. Catalyzes the transfer of a dimethylallyl group onto the adenine at position 37 in tRNAs that read codons beginning with uridine, leading to the formation of N6-(dimethylallyl)adenosine (i(6)A). The polypeptide is tRNA dimethylallyltransferase 1 (Azobacteroides pseudotrichonymphae genomovar. CFP2).